The following is a 77-amino-acid chain: U8-lycotoxin-Ls1m (77 aa).

The first 20 residues, 1–20 (MKLMIFTGLVLFAIVRLIEA), serve as a signal peptide directing secretion. Residues 21–26 (QAENEK) constitute a propeptide that is removed on maturation.

The protein belongs to the neurotoxin 19 (CSTX) family. 08 (U8-Lctx) subfamily. In terms of processing, contains 4 disulfide bonds. In terms of tissue distribution, expressed by the venom gland.

Its subcellular location is the secreted. The protein is U8-lycotoxin-Ls1m of Lycosa singoriensis (Wolf spider).